Consider the following 252-residue polypeptide: Imidazole glycerol phosphate synthase subunit HisF (252 aa).

Active-site residues include Asp-11 and Asp-130.

The protein belongs to the HisA/HisF family. In terms of assembly, heterodimer of HisH and HisF.

The protein localises to the cytoplasm. It catalyses the reaction 5-[(5-phospho-1-deoxy-D-ribulos-1-ylimino)methylamino]-1-(5-phospho-beta-D-ribosyl)imidazole-4-carboxamide + L-glutamine = D-erythro-1-(imidazol-4-yl)glycerol 3-phosphate + 5-amino-1-(5-phospho-beta-D-ribosyl)imidazole-4-carboxamide + L-glutamate + H(+). The protein operates within amino-acid biosynthesis; L-histidine biosynthesis; L-histidine from 5-phospho-alpha-D-ribose 1-diphosphate: step 5/9. Functionally, IGPS catalyzes the conversion of PRFAR and glutamine to IGP, AICAR and glutamate. The HisF subunit catalyzes the cyclization activity that produces IGP and AICAR from PRFAR using the ammonia provided by the HisH subunit. The chain is Imidazole glycerol phosphate synthase subunit HisF from Dictyoglomus turgidum (strain DSM 6724 / Z-1310).